The following is a 224-amino-acid chain: Small ribosomal subunit protein uS3 (224 aa).

One can recognise a KH type-2 domain in the interval 39 to 107; sequence IREFLKKKPS…DVWVEIAEVK (69 aa).

Belongs to the universal ribosomal protein uS3 family. In terms of assembly, part of the 30S ribosomal subunit. Forms a tight complex with proteins S10 and S14.

Binds the lower part of the 30S subunit head. Binds mRNA in the 70S ribosome, positioning it for translation. The chain is Small ribosomal subunit protein uS3 from Chlamydia trachomatis serovar D (strain ATCC VR-885 / DSM 19411 / UW-3/Cx).